The sequence spans 285 residues: Chromatin modification-related protein YNG2 (285 aa).

2 disordered regions span residues Met-1–Lys-24 and Arg-155–Phe-201. The span at Asp-8–Lys-24 shows a compositional bias: polar residues. A coiled-coil region spans residues Ser-10–Ala-36. The segment at Gln-224–Glu-273 adopts a PHD-type zinc-finger fold. Zn(2+)-binding residues include Cys-227, Cys-229, Cys-240, Cys-245, His-251, Cys-254, Cys-267, and Cys-270.

This sequence belongs to the ING family. In terms of assembly, interacts with H3K4me3 and to a lesser extent with H3K4me2. Component of the NuA4 histone acetyltransferase complex.

It localises to the nucleus. In terms of biological role, component of the NuA4 histone acetyltransferase complex which is involved in transcriptional activation of selected genes principally by acetylation of nucleosomal histone H4 and H2A. The NuA4 complex is also involved in DNA repair. Involved in cell cycle progression and meiosis. In Eremothecium gossypii (strain ATCC 10895 / CBS 109.51 / FGSC 9923 / NRRL Y-1056) (Yeast), this protein is Chromatin modification-related protein YNG2 (YNG2).